Reading from the N-terminus, the 285-residue chain is HTH-type transcriptional regulator MurR (285 aa).

The HTH rpiR-type domain occupies 1 to 77 (MLYLTKISNA…MALIGEYSAS (77 aa)). The H-T-H motif DNA-binding region spans 37-56 (SRQMAKQLGISQSSIVKFAQ). In terms of domain architecture, SIS spans 128 to 279 (IIEVISKAPF…SLKMIQRSSE (152 aa)).

Homotetramer.

Its pathway is amino-sugar metabolism; N-acetylmuramate degradation [regulation]. Its function is as follows. Represses the expression of the murPQ operon involved in the uptake and degradation of N-acetylmuramic acid (MurNAc). Binds to two adjacent inverted repeats within the operator region. MurNAc 6-phosphate, the substrate of MurQ, is the specific inducer that weakens binding of MurR to the operator. The protein is HTH-type transcriptional regulator MurR of Shigella boydii serotype 4 (strain Sb227).